Here is a 148-residue protein sequence, read N- to C-terminus: UPF0260 protein mll2411 (148 aa).

This sequence belongs to the UPF0260 family.

The polypeptide is UPF0260 protein mll2411 (Mesorhizobium japonicum (strain LMG 29417 / CECT 9101 / MAFF 303099) (Mesorhizobium loti (strain MAFF 303099))).